Consider the following 361-residue polypeptide: Free fatty acid receptor 4 (361 aa).

Topologically, residues 1 to 45 (MSPECARAAGDAPLRSLEQANRTRFSFFSDVKGDHRLLLAAVETT) are extracellular. The N-linked (GlcNAc...) asparagine glycan is linked to asparagine 21. A helical transmembrane segment spans residues 46–66 (VLALIFAVSLLGNVCALVLVA). Over 67 to 77 (RRRRRGTTACL) the chain is Cytoplasmic. Residues 78-98 (VLNLFCADLLFISAIPLVLAV) form a helical membrane-spanning segment. Residues 99–112 (RWTEAWLLGPVACH) lie on the Extracellular side of the membrane. A disulfide bridge links cysteine 111 with cysteine 194. The chain crosses the membrane as a helical span at residues 113-133 (LLFYLMTLSGSVTILTLAAVS). Over 134 to 156 (LERMVCIVHLQRGVRGPGRRARA) the chain is Cytoplasmic. The helical transmembrane segment at 157–177 (VLLTLIWGYSAVAALPLCVFF) threads the bilayer. Topologically, residues 178-204 (RVVPQRLPGADQEISICTLIWPTIAGE) are extracellular. A helical transmembrane segment spans residues 205–225 (ISWDVSFVTLNFLVPGLVIVI). Residues 226-268 (SYSKILQITKASRKRLTVSLAYSESHQIRVSQQDFRLFRTLFL) are Cytoplasmic-facing. The chain crosses the membrane as a helical span at residues 269–289 (LMVSFFIMWSPIIITILLILI). Topologically, residues 290 to 295 (QNFKQD) are extracellular. A helical transmembrane segment spans residues 296 to 316 (LVIWPSLFFWVVAFTFANSAL). Residues 317–361 (NPILYNMTLCRNEWKKIFCCFWFPEKGAILTDTSVKRNDLSVISG) lie on the Cytoplasmic side of the membrane. Residues threonine 347 and threonine 349 each carry the phosphothreonine modification. A phosphoserine mark is found at serine 350, serine 357, and serine 360.

The protein belongs to the G-protein coupled receptor 1 family. Interacts (via C-terminus) with ARRB2 following LCFAs stimulation. In terms of processing, phosphorylated at two clusters of Ser and Thr residues located in the intracellular C-terminus. Prerequisite for FFAR4 internalization via an ARRB2-dependent pathway. Highly expressed in lung and colon.

Its subcellular location is the cell membrane. It is found in the endosome membrane. The protein localises to the lysosome membrane. The protein resides in the cell projection. It localises to the cilium membrane. Its function is as follows. G-protein-coupled receptor for long-chain fatty acids (LCFAs) with a major role in adipogenesis, energy metabolism and inflammation. Signals via G-protein and beta-arrestin pathways. LCFAs sensing initiates activation of phosphoinositidase C-linked G proteins GNAQ and GNA11 (G(q)/G(11)), inducing a variety of cellular responses via second messenger pathways such as intracellular calcium mobilization, modulation of cyclic adenosine monophosphate (cAMP) production, and mitogen-activated protein kinases (MAPKs). After LCFAs binding, associates with beta-arrestin ARRB2 that acts as an adapter protein coupling the receptor to specific downstream signaling pathways, as well as mediating receptor endocytosis. In response to dietary fats, plays an important role in the regulation of adipocyte proliferation and differentiation. Acts as a receptor for omega-3 polyunsaturated fatty acids (PUFAs) at primary cilium of perivascular preadipocytes, initiating an adipogenic program via cAMP and CTCF-dependent chromatin remodeling that ultimately results in transcriptional activation of adipogenic genes and cell cycle entry. Induces differentiation of brown and beige adipocytes probably via autocrine and endocrine functions of FGF21 hormone. Contributes to the thermogenic activation of brown adipose tissue and the browning of white adipose tissue. Activates brown adipocytes by initiating intracellular calcium signaling leading to mitochondrial depolarization and fission, and overall increased mitochondrial respiration. Consequently stimulates fatty acid uptake and oxidation in mitochondria together with UCP1-mediated thermogenic respiration, eventually reducing fat mass. Regulates bi-potential differentiation of bone marrow mesenchymal stem cells toward osteoblasts or adipocytes likely by up-regulating distinct integrins. In response to dietary fats regulates hormone secretion and appetite. Stimulates GIP and GLP1 secretion from enteroendocrine cells as well as GCG secretion in pancreatic alpha cells, thereby playing a role in the regulation of blood glucose levels. Negatively regulates glucose-induced SST secretion in pancreatic delta cells. Mediates LCFAs inhibition of GHRL secretion, an appetite-controlling hormone. In taste buds, contributes to sensing of dietary fatty acids by the gustatory system. During the inflammatory response, promotes anti-inflammatory M2 macrophage differentiation in adipose tissue. Mediates the anti-inflammatory effects of omega-3 PUFAs via inhibition of NLRP3 inflammasome activation. In this pathway, interacts with adapter protein ARRB2 and inhibits the priming step triggered by Toll-like receptors (TLRs) at the level of TAK1 and TAB1. Further inhibits the activation step when ARRB2 directly associates with NLRP3, leading to inhibition of pro-inflammatory cytokine release. Mediates LCFAs anti-apoptotic effects. This Macaca fascicularis (Crab-eating macaque) protein is Free fatty acid receptor 4 (FFAR4).